The sequence spans 430 residues: Adenylosuccinate synthetase (430 aa).

Residues 12–18 (GDEGKGK) and 40–42 (GHT) each bind GTP. D13 functions as the Proton acceptor in the catalytic mechanism. Mg(2+) is bound by residues D13 and G40. IMP-binding positions include 13 to 16 (DEGK), 38 to 41 (NAGH), T130, R144, Q224, T239, and R303. The active-site Proton donor is H41. 299–305 (TVTGRKR) lines the substrate pocket. Residues R305, 331 to 333 (KLD), and 413 to 415 (STS) contribute to the GTP site.

The protein belongs to the adenylosuccinate synthetase family. In terms of assembly, homodimer. It depends on Mg(2+) as a cofactor.

It localises to the cytoplasm. It catalyses the reaction IMP + L-aspartate + GTP = N(6)-(1,2-dicarboxyethyl)-AMP + GDP + phosphate + 2 H(+). It functions in the pathway purine metabolism; AMP biosynthesis via de novo pathway; AMP from IMP: step 1/2. In terms of biological role, plays an important role in the de novo pathway of purine nucleotide biosynthesis. Catalyzes the first committed step in the biosynthesis of AMP from IMP. The protein is Adenylosuccinate synthetase of Paracoccus denitrificans (strain Pd 1222).